Consider the following 50-residue polypeptide: Protein hunchback (50 aa).

3 C2H2-type zinc fingers span residues 1–5 (HIRNH), 11–33 (FKCN…LKSH), and 39–50 (YRCADCAYATKY).

This sequence belongs to the hunchback C2H2-type zinc-finger protein family.

The protein localises to the nucleus. Gap class segmentation protein that controls development of head structures. The protein is Protein hunchback (hb) of Schultesia lampyridiformis (Firefly mimic roach).